Reading from the N-terminus, the 173-residue chain is dCTP deaminase, dUMP-forming (173 aa).

DCTP contacts are provided by residues 93-98 (RSSTGR), Asp-111, 119-121 (TLE), Gln-138, and Tyr-151. Glu-121 serves as the catalytic Proton donor/acceptor.

It belongs to the dCTP deaminase family. As to quaternary structure, homotrimer.

The enzyme catalyses dCTP + 2 H2O = dUMP + NH4(+) + diphosphate. It functions in the pathway pyrimidine metabolism; dUMP biosynthesis; dUMP from dCTP: step 1/1. Functionally, bifunctional enzyme that catalyzes both the deamination of dCTP to dUTP and the hydrolysis of dUTP to dUMP without releasing the toxic dUTP intermediate. In Clostridium botulinum (strain Eklund 17B / Type B), this protein is dCTP deaminase, dUMP-forming.